Here is a 305-residue protein sequence, read N- to C-terminus: Endonuclease 1 (305 aa).

A signal peptide spans 1–28; it reads MASAFRSSTRLILVLGILILCSVSSVRS. 2 residues coordinate a divalent metal cation: Trp-29 and His-34. Substrate is bound at residue 29 to 34; sequence WSKEGH. Cys-38 and Cys-69 are disulfide-bonded. The a divalent metal cation site is built by Asp-73 and His-88. Substrate-binding positions include 73 to 79, 88 to 91, and 98 to 103; these read DQIRHWY, HYID, and SYEYSR. 3 disulfides stabilise this stretch: Cys-97/Cys-249, Cys-105/Cys-115, and Cys-230/Cys-236. 2 residues coordinate substrate: Asn-122 and Tyr-139. N-linked (GlcNAc...) asparagine glycosylation occurs at Asn-122. The N-linked (GlcNAc...) asparagine glycan is linked to Asn-140. Positions 150, 154, 160, 184, and 188 each coordinate a divalent metal cation. The substrate binding stretch occupies residues 150 to 199; the sequence is HFMGDIHQPMHVGFTSDEGGNTIDLRWYKHKSNLHHVWDREIILTALKEN. The N-linked (GlcNAc...) asparagine glycan is linked to Asn-214. Residues 287-305 constitute a propeptide, removed in mature form; that stretch reads MILNRVFSDDHAIAGVAAT.

Belongs to the nuclease type I family. As to quaternary structure, monomer. Mn(2+) is required as a cofactor. Ca(2+) serves as cofactor. In terms of tissue distribution, mostly expressed in flowers and during leaf and stem senescence, and, to a lower extent, detectable at low levels in roots, leaves, and stems. Particularly expressed in senescing tissues in a NAC92/ORE1-dependent manner.

The catalysed reaction is Endonucleolytic cleavage to 5'-phosphomononucleotide and 5'-phosphooligonucleotide end-products.. In terms of biological role, endonuclease that can use RNA, single-stranded and double-stranded DNA as substrates. Hydrolyzes single-stranded DNA and RNA without apparent specificity for bases during senescence. Endonuclease that recognizes and cleaves all types of mismatches with high efficiency, including heteroduplex double-stranded DNA. Maybe involved in programmed cell death (PCD) and senescence. This Arabidopsis thaliana (Mouse-ear cress) protein is Endonuclease 1.